Consider the following 227-residue polypeptide: Urease accessory protein UreF 2 (227 aa).

This sequence belongs to the UreF family. UreD, UreF and UreG form a complex that acts as a GTP-hydrolysis-dependent molecular chaperone, activating the urease apoprotein by helping to assemble the nickel containing metallocenter of UreC. The UreE protein probably delivers the nickel.

The protein resides in the cytoplasm. In terms of biological role, required for maturation of urease via the functional incorporation of the urease nickel metallocenter. The protein is Urease accessory protein UreF 2 of Brucella anthropi (strain ATCC 49188 / DSM 6882 / CCUG 24695 / JCM 21032 / LMG 3331 / NBRC 15819 / NCTC 12168 / Alc 37) (Ochrobactrum anthropi).